Here is a 1532-residue protein sequence, read N- to C-terminus: Multidrug resistance-associated protein 1 (1532 aa).

At 1–33 (MALSSFCSSDGSDPLWDWNVTWHTSNPDFTKCF) the chain is on the extracellular side. N-linked (GlcNAc...) asparagine glycosylation occurs at asparagine 19. The chain crosses the membrane as a helical span at residues 34 to 54 (QNTVLTWVPCFYLWSCFPLYF). At 55–74 (LYLSRHDRGYIQMTHLNKAK) the chain is on the cytoplasmic side. The helical transmembrane segment at 75 to 95 (TALGFFLWIICWADLFYSFWE) threads the bilayer. At 96 to 100 (RSQGM) the chain is on the extracellular side. A helical transmembrane segment spans residues 101 to 121 (LLAPVLLVSPTLLGITMLLAT). At 122–133 (FLIQFERRKGVQ) the chain is on the cytoplasmic side. Residues 134 to 154 (SSGIMLTFWLVALLCALAILR) form a helical membrane-spanning segment. At 155–172 (SKIISALKKDAQVDMFRD) the chain is on the extracellular side. The helical transmembrane segment at 173 to 193 (SAFYLYFTLVFIQLVLSCFSD) threads the bilayer. Residues 194 to 317 (SSPLFSETVR…KDRDPSLFKV (124 aa)) are Cytoplasmic-facing. Tyrosine 277 carries the post-translational modification Phosphotyrosine. Serine 290 is modified (phosphoserine). A helical transmembrane segment spans residues 318 to 338 (LYKTFGPYFLMSFLYKALHDL). An ABC transmembrane type-1 1 domain is found at 326–609 (FLMSFLYKAL…LPMVISSIVQ (284 aa)). At 339 to 364 (MMFAGPEILELIINFVNDREAPDWQG) the chain is on the extracellular side. Residues 365-385 (YLYTALLFVSACLQTLALHQY) form a helical membrane-spanning segment. Residues 386-441 (FHICFVTGMRIKTAVVGAVYRKALVITNSARKSSTVGEIVNLMSVDAQRFMDLATY) are Cytoplasmic-facing. The helical transmembrane segment at 442 to 462 (INMIWSAPLQVTLALYFLWLN) threads the bilayer. Over 463-465 (LGP) the chain is Extracellular. The chain crosses the membrane as a helical span at residues 466-486 (SVLAGVAVMILMVPFNAVMAM). The Cytoplasmic segment spans residues 487-548 (KTKTYQVAHM…VLKKSAYLAA (62 aa)). At lysine 504 the chain carries N6-succinyllysine. Residues 549-569 (VGTFTWVCTPFLVALSTFAVF) traverse the membrane as a helical segment. The Extracellular portion of the chain corresponds to 570–591 (VTVDEKNILDAKKAFVSLALFN). A helical membrane pass occupies residues 592-612 (ILRFPLNILPMVISSIVQASV). The Cytoplasmic segment spans residues 613-967 (SLKRLRIFLS…VKLSVYWNYM (355 aa)). The 225-residue stretch at 645–869 (ITVKNATFTW…DGAFAEFVRT (225 aa)) folds into the ABC transporter 1 domain. 679–686 (GQVGCGKS) contacts ATP. Phosphoserine occurs at positions 879, 883, 916, and 931. Residues 968 to 988 (KAIGLCISFLSIFLFLCNHVS) traverse the membrane as a helical segment. Positions 975 to 1257 (SFLSIFLFLC…LVRMSSEMET (283 aa)) constitute an ABC transmembrane type-1 2 domain. Topologically, residues 989 to 1026 (ALASNYWLSLWTDDRPAVNGTQENRNFRLSVYGALGIL) are extracellular. Residues 1027 to 1047 (QGVAVFGYSMAVSIGGIFASR) traverse the membrane as a helical segment. Topologically, residues 1048–1090 (RLHLDLLQNVLRSPMSFFERTPSGNLVNRFSKELDTVDSMIPQ) are cytoplasmic. A helical transmembrane segment spans residues 1091–1111 (VIKMFMGSLFSVIGAVIIILL). A topological domain (extracellular) is located at residue alanine 1112. The chain crosses the membrane as a helical span at residues 1113–1133 (TPIAAVIIPPLGLVYFFVQRF). Over 1134–1204 (YVASSRQLKR…VANRWLAVRL (71 aa)) the chain is Cytoplasmic. A helical membrane pass occupies residues 1205–1225 (ECVGNCIVLFAALFAVISRHS). The Extracellular portion of the chain corresponds to 1226–1227 (LS). A helical membrane pass occupies residues 1228 to 1248 (AGLVGLSVSYSLQITAYLNWL). Topologically, residues 1249–1532 (VRMSSEMETN…YSMAKDAGLV (284 aa)) are cytoplasmic. In terms of domain architecture, ABC transporter 2 spans 1294-1528 (VEFRDYCLRY…RGVFYSMAKD (235 aa)). 1328–1335 (GRTGAGKS) lines the ATP pocket.

This sequence belongs to the ABC transporter superfamily. ABCC family. Conjugate transporter (TC 3.A.1.208) subfamily. Glycosylated. In terms of tissue distribution, skeletal muscle, brain, heart, spleen, lung and kidney.

It localises to the cell membrane. Its subcellular location is the basolateral cell membrane. It carries out the reaction ATP + H2O + xenobioticSide 1 = ADP + phosphate + xenobioticSide 2.. The enzyme catalyses an S-substituted glutathione(in) + ATP + H2O = an S-substituted glutathione(out) + ADP + phosphate + H(+). It catalyses the reaction sphing-4-enine 1-phosphate(in) + ATP + H2O = sphing-4-enine 1-phosphate(out) + ADP + phosphate + H(+). The catalysed reaction is leukotriene C4(in) + ATP + H2O = leukotriene C4(out) + ADP + phosphate + H(+). It carries out the reaction 17beta-estradiol 17-O-(beta-D-glucuronate)(in) + ATP + H2O = 17beta-estradiol 17-O-(beta-D-glucuronate)(out) + ADP + phosphate + H(+). The enzyme catalyses daunorubicin(in) + ATP + H2O = daunorubicin(out) + ADP + phosphate + H(+). It catalyses the reaction vincristine(in) + ATP + H2O = vincristine(out) + ADP + phosphate + H(+). The catalysed reaction is 2',3'-cGAMP(in) + ATP + H2O = 2',3'-cGAMP(out) + ADP + phosphate + H(+). It carries out the reaction S-[(2E,6E,10E)-geranylgeranyl]-L-glutathione(in) + ATP + H2O = S-[(2E,6E,10E)-geranylgeranyl]-L-glutathione(out) + ADP + phosphate + H(+). The enzyme catalyses prostaglandin A2-S-(R)-glutathione(in) + ATP + H2O = prostaglandin A2-S-(R)-glutathione(out) + ADP + phosphate + H(+). It catalyses the reaction prostaglandin A2-S-(S)-glutathione(in) + ATP + H2O = prostaglandin A2-S-(S)-glutathione(out) + ADP + phosphate + H(+). MK 571 inhibits sphingosine 1-phosphate and leukotriene C4 export. Mediates export of organic anions and drugs from the cytoplasm. Mediates ATP-dependent transport of glutathione and glutathione conjugates, leukotriene C4, estradiol-17-beta-o-glucuronide, methotrexate, antiviral drugs and other xenobiotics. Confers resistance to anticancer drugs by decreasing accumulation of drug in cells, and by mediating ATP- and GSH-dependent drug export. Hydrolyzes ATP with low efficiency. Catalyzes the export of sphingosine 1-phosphate from mast cells independently of their degranulation. Participates in inflammatory response by allowing export of leukotriene C4 from leukotriene C4-synthesizing cells. Exports S-geranylgeranyl-glutathione (GGG) in lymphoid cells and stromal compartments of lymphoid organs. ABCC1 (via extracellular transport) with GGT5 (via GGG catabolism) establish GGG gradients within lymphoid tissues to position P2RY8-positive lymphocytes at germinal centers in lymphoid follicles and restrict their chemotactic transmigration from blood vessels to the bone marrow parenchyma. Mediates basolateral export of GSH-conjugated R- and S-prostaglandin A2 diastereomers in polarized epithelial cells. This chain is Multidrug resistance-associated protein 1, found in Rattus norvegicus (Rat).